The sequence spans 97 residues: Aspartyl/glutamyl-tRNA(Asn/Gln) amidotransferase subunit C (97 aa).

Belongs to the GatC family. Heterotrimer of A, B and C subunits.

It carries out the reaction L-glutamyl-tRNA(Gln) + L-glutamine + ATP + H2O = L-glutaminyl-tRNA(Gln) + L-glutamate + ADP + phosphate + H(+). It catalyses the reaction L-aspartyl-tRNA(Asn) + L-glutamine + ATP + H2O = L-asparaginyl-tRNA(Asn) + L-glutamate + ADP + phosphate + 2 H(+). Functionally, allows the formation of correctly charged Asn-tRNA(Asn) or Gln-tRNA(Gln) through the transamidation of misacylated Asp-tRNA(Asn) or Glu-tRNA(Gln) in organisms which lack either or both of asparaginyl-tRNA or glutaminyl-tRNA synthetases. The reaction takes place in the presence of glutamine and ATP through an activated phospho-Asp-tRNA(Asn) or phospho-Glu-tRNA(Gln). The sequence is that of Aspartyl/glutamyl-tRNA(Asn/Gln) amidotransferase subunit C from Synechococcus sp. (strain JA-2-3B'a(2-13)) (Cyanobacteria bacterium Yellowstone B-Prime).